Here is a 160-residue protein sequence, read N- to C-terminus: Cytochrome b6-f complex subunit 4 (160 aa).

The next 3 membrane-spanning stretches (helical) occupy residues 36 to 56 (LLYVFPVVILGTIGLLVGLAV), 95 to 115 (LLGIACQGAIPLGLLLVPFIE), and 131 to 151 (AVFLFGTVVTIWLGAGATFPI).

This sequence belongs to the cytochrome b family. PetD subfamily. As to quaternary structure, the 4 large subunits of the cytochrome b6-f complex are cytochrome b6, subunit IV (17 kDa polypeptide, PetD), cytochrome f and the Rieske protein, while the 4 small subunits are PetG, PetL, PetM and PetN. The complex functions as a dimer.

It is found in the cellular thylakoid membrane. Component of the cytochrome b6-f complex, which mediates electron transfer between photosystem II (PSII) and photosystem I (PSI), cyclic electron flow around PSI, and state transitions. This is Cytochrome b6-f complex subunit 4 from Crocosphaera subtropica (strain ATCC 51142 / BH68) (Cyanothece sp. (strain ATCC 51142)).